Reading from the N-terminus, the 262-residue chain is 5'-nucleotidase SurE (262 aa).

4 residues coordinate a divalent metal cation: Asp-8, Asp-9, Ser-40, and Asn-92.

The protein belongs to the SurE nucleotidase family. The cofactor is a divalent metal cation.

It localises to the cytoplasm. The enzyme catalyses a ribonucleoside 5'-phosphate + H2O = a ribonucleoside + phosphate. Nucleotidase that shows phosphatase activity on nucleoside 5'-monophosphates. The sequence is that of 5'-nucleotidase SurE from Xylella fastidiosa (strain 9a5c).